The chain runs to 966 residues: Dynamin-like GTPase OPA1, mitochondrial (966 aa).

The transit peptide at 1–86 directs the protein to the mitochondrion; the sequence is MLRAGSVVTC…GGHGYQQHRT (86 aa). The Mitochondrial matrix segment spans residues 87-95; sequence FWVARLAAR. The chain crosses the membrane as a helical span at residues 96–112; that stretch reads LLKLRYILLGSAVGGGY. Residues 113–776 are Mitochondrial intermembrane-facing; that stretch reads TAKKTYDEWK…SVIADMVGPD (664 aa). Residues 189–217 are disordered; sequence ESALRAPDVPPASAAMADSGDKQFKKSSD. Over residues 207 to 217 the composition is skewed to basic and acidic residues; that stretch reads SGDKQFKKSSD. A coiled-coil region spans residues 213–259; it reads KKSSDKEKVDQLQEELLRTQLKYQRMLERLEKENKELRKVVLQKDDK. Positions 291–567 constitute a Dynamin-type G domain; that stretch reads QDHLPRVVVV…FWKMVRESVE (277 aa). A G1 motif region spans residues 301 to 308; the sequence is GDQSAGKT. 6 residues coordinate GTP: serine 304, glycine 306, lysine 307, threonine 308, serine 309, and glycine 323. Threonine 308 contacts Mg(2+). Residues 327–330 form a G2 motif region; that stretch reads MMTR. Mg(2+)-binding residues include threonine 329 and aspartate 404. Positions 404–407 are G3 motif; it reads DLPG. The interval 473-476 is G4 motif; it reads TKVD. GTP is bound by residues lysine 474, aspartate 476, and threonine 509. The interval 507-510 is G5 motif; it reads VVTG. Stalk region regions lie at residues 595-842 and 880-934; these read DRNE…IKDT and CNDV…VQLI. Positions 742-862 are paddle region; sequence TDKPQWDAAI…QKALLHCNLC (121 aa). Residues 777–787 lie within the membrane without spanning it; it reads WKQRWMSWKNR. Over 788–966 the chain is Mitochondrial intermembrane; that stretch reads TPEQHTRNET…AFIEALHKEK (179 aa). Cysteine 862 and cysteine 880 are disulfide-bonded. Residues 901–966 are a coiled coil; it reads RQQLTNTEVR…AFIEALHKEK (66 aa).

Belongs to the TRAFAC class dynamin-like GTPase superfamily. Dynamin/Fzo/YdjA family. Oligomeric complex consisting of membrane-bound and soluble forms of OPA1. Cleaved by OMA1 or YME1L downstream of the transmembrane region in response to different signals to generate soluble forms. Cleaved by OMA1 at position S1 following stress conditions, generating the short soluble form (Dynamin-like GTPase OPA1, short form; S-OPA1).

It is found in the mitochondrion inner membrane. The protein resides in the mitochondrion intermembrane space. The enzyme catalyses GTP + H2O = GDP + phosphate + H(+). In terms of biological role, dynamin-related GTPase that is essential for normal mitochondrial morphology by mediating fusion of the mitochondrial inner membranes, regulating cristae morphology and maintaining respiratory chain function. Exists in two forms: the transmembrane, long form (Dynamin-like GTPase OPA1, long form; L-OPA1), which is tethered to the inner mitochondrial membrane, and the short soluble form (Dynamin-like GTPase OPA1, short form; S-OPA1), which results from proteolytic cleavage and localizes in the intermembrane space. Both forms (L-OPA1 and S-OPA1) cooperate to catalyze the fusion of the mitochondrial inner membrane. The equilibrium between L-OPA1 and S-OPA1 is essential: excess levels of S-OPA1, produced by cleavage by OMA1 following loss of mitochondrial membrane potential, lead to an impaired equilibrium between L-OPA1 and S-OPA1, inhibiting mitochondrial fusion. The balance between L-OPA1 and S-OPA1 also influences cristae shape and morphology. Its role in mitochondrial morphology is required for mitochondrial genome maintenance. Its function is as follows. Constitutes the transmembrane long form (L-OPA1) that plays a central role in mitochondrial inner membrane fusion and cristae morphology. L-OPA1 and the soluble short form (S-OPA1) form higher-order helical assemblies that coordinate the fusion of mitochondrial inner membranes. Inner membrane-anchored L-OPA1 molecules initiate membrane remodeling by recruiting soluble S-OPA1 to rapidly polymerize into a flexible cylindrical scaffold encaging the mitochondrial inner membrane. Once at the membrane surface, the formation of S-OPA1 helices induce bilayer curvature. OPA1 dimerization through the paddle region, which inserts into cardiolipin-containing membrane, promotes GTP hydrolysis and the helical assembly of a flexible OPA1 lattice on the membrane, which drives membrane curvature and mitochondrial fusion. Plays a role in the maintenance and remodeling of mitochondrial cristae, some invaginations of the mitochondrial inner membrane that provide an increase in the surface area. Probably acts by forming helical filaments at the inside of inner membrane tubes with the shape and dimensions of crista junctions. Constitutes the soluble short form (S-OPA1) generated by cleavage by OMA1, which plays a central role in mitochondrial inner membrane fusion and cristae morphology. The transmembrane long form (L-OPA1) and the S-OPA1 form higher-order helical assemblies that coordinate the fusion of mitochondrial inner membranes. Inner membrane-anchored L-OPA1 molecules initiate membrane remodeling by recruiting soluble S-OPA1 to rapidly polymerize into a flexible cylindrical scaffold encaging the mitochondrial inner membrane. Once at the membrane surface, the formation of S-OPA1 helices induce bilayer curvature. OPA1 dimerization through the paddle region, which inserts into cardiolipin-containing membrane, promotes GTP hydrolysis and the helical assembly of a flexible OPA1 lattice on the membrane, which drives membrane curvature and mitochondrial fusion. Excess levels of S-OPA1 produced by cleavage by OMA1 following stress conditions that induce loss of mitochondrial membrane potential, lead to an impaired equilibrium between L-OPA1 and S-OPA1, thereby inhibiting mitochondrial fusion. Plays a role in the maintenance and remodeling of mitochondrial cristae, some invaginations of the mitochondrial inner membrane that provide an increase in the surface area. Probably acts by forming helical filaments at the inside of inner membrane tubes with the shape and dimensions of crista junctions. This chain is Dynamin-like GTPase OPA1, mitochondrial, found in Danio rerio (Zebrafish).